A 219-amino-acid chain; its full sequence is Vesicle-associated membrane protein 711 (219 aa).

Ala-2 is modified (N-acetylalanine). Residues 2 to 189 (AILYALVARG…RSNVWWRNCK (188 aa)) lie on the Cytoplasmic side of the membrane. Residues 7–111 (LVARGTVVLS…AMNEEFSRVL (105 aa)) enclose the Longin domain. One can recognise a v-SNARE coiled-coil homology domain in the interval 126 to 186 (RINRIKGEMN…RRFRSNVWWR (61 aa)). The chain crosses the membrane as a helical; Anchor for type IV membrane protein span at residues 190–210 (LTVLLILLLLVIIYIAVAFLC). At 211 to 219 (HGPTLPSCI) the chain is on the vesicular side.

Belongs to the synaptobrevin family. In terms of tissue distribution, expressed in flowers, leaves, stems and roots.

It is found in the vacuole membrane. The protein localises to the prevacuolar compartment membrane. Its function is as follows. Involved in the targeting and/or fusion of transport vesicles to their target membrane. The polypeptide is Vesicle-associated membrane protein 711 (Arabidopsis thaliana (Mouse-ear cress)).